A 461-amino-acid chain; its full sequence is Tubulin gamma chain (461 aa).

142 to 148 (AGGTGSG) lines the GTP pocket.

The protein belongs to the tubulin family.

It is found in the cytoplasm. The protein localises to the cytoskeleton. It localises to the microtubule organizing center. Its subcellular location is the spindle pole body. In terms of biological role, tubulin is the major constituent of microtubules. The gamma chain is found at microtubule organizing centers (MTOC) such as the spindle poles or the centrosome, suggesting that it is involved in the minus-end nucleation of microtubule assembly. The polypeptide is Tubulin gamma chain (tbg) (Neurospora crassa (strain ATCC 24698 / 74-OR23-1A / CBS 708.71 / DSM 1257 / FGSC 987)).